We begin with the raw amino-acid sequence, 368 residues long: Ubl carboxyl-terminal hydrolase 18 (368 aa).

A mediates interaction with IFNAR2 region spans residues 31–48 (MKRKRVLSRDLCSAWDSP). The segment at 48 to 109 (PHGLVGLHNI…LLLLLEKMQD (62 aa)) is mediates interaction with STAT2. The USP domain maps to 52-366 (VGLHNIGQTC…TAYLLVYTKT (315 aa)). The Nucleophile role is filled by C61. Residues 299–308 (ELFAVIAHVG) form a mediates interaction with STAT2 and necessary for the negative regulation of the type I IFN signaling pathway region. Residues 309–368 (MADFGHYCAYIRNPVDGKWFCFNDSHVCWVTWKDVQCTYGNHRYRWRETAYLLVYTKTGS) are mediates interaction with IFNAR2. H314 serves as the catalytic Proton acceptor.

Belongs to the peptidase C19 family. As to quaternary structure, interacts with STAT2; the interaction is direct. Interacts with IFNAR2; indirectly via STAT2, it negatively regulates the assembly of the ternary interferon-IFNAR1-IFNAR2 complex and inhibits type I interferon signaling. Interacts with STING1. Interacts with USP20.

It catalyses the reaction Thiol-dependent hydrolysis of ester, thioester, amide, peptide and isopeptide bonds formed by the C-terminal Gly of ubiquitin (a 76-residue protein attached to proteins as an intracellular targeting signal).. Functionally, interferon-induced ISG15-specific protease that plays a crucial role for maintaining a proper balance of ISG15-conjugated proteins in cells. Regulates protein ISGylation by efficiently cleaving ISG15 conjugates linked via isopeptide bonds. Regulates T-cell activation and T-helper 17 (Th17) cell differentiation by deubiquitinating TAK1, likely to keep TAK1-TAB complexes in steady conditions. In turn, restricts activation of NF-kappa-B, NFAT, and JNK as well as expression of IL2 in T-cells after TCR activation. Acts as a molecular adapter with USP20 to promote innate antiviral response through deubiquitinating STING1. Involved also in the negative regulation of the inflammatory response triggered by type I interferon. Upon recruitment by STAT2 to the type I interferon receptor subunit IFNAR2 interferes with the assembly of the ternary interferon-IFNAR1-IFNAR2 complex and acts as a negative regulator of the type I interferon signaling pathway. The protein is Ubl carboxyl-terminal hydrolase 18 (Usp18) of Mus musculus (Mouse).